A 505-amino-acid chain; its full sequence is Pleckstrin homology domain-containing family D member 1 (505 aa).

The PH domain occupies 28 to 136 (KVQLYGVLWK…WLEMLQESGK (109 aa)). The stretch at 146-391 (EAMIKSLEAQ…KVRNKEKEER (246 aa)) forms a coiled coil. The tract at residues 264–284 (DKNQPQPLTNQSEQPPATDGL) is disordered. Polar residues predominate over residues 267 to 278 (QPQPLTNQSEQP). At Arg-502 the chain carries Omega-N-methylarginine.

Belongs to the PLEKHD1 family.

The chain is Pleckstrin homology domain-containing family D member 1 (Plekhd1) from Rattus norvegicus (Rat).